We begin with the raw amino-acid sequence, 222 residues long: Glutathione S-transferase A2 (222 aa).

Position 2 is an N-acetylalanine (A2). The GST N-terminal domain occupies E3–G83. K4 carries the N6-succinyllysine modification. Glutathione-binding positions include Y9, R45, Q54–V55, and Q67–T68. The GST C-terminal domain maps to D85 to P207. The disordered stretch occupies residues Q199–F222. Basic and acidic residues predominate over residues P206–F222.

It belongs to the GST superfamily. Alpha family. As to quaternary structure, homodimer or heterodimer of GSTA1 and GSTA2. In terms of tissue distribution, liver.

It is found in the cytoplasm. It catalyses the reaction RX + glutathione = an S-substituted glutathione + a halide anion + H(+). In terms of biological role, catalyzes the conjugation of glutathione to a large variety of electrophilic compounds. The chain is Glutathione S-transferase A2 (GSTA2) from Homo sapiens (Human).